The sequence spans 227 residues: uncharacterized protein (227 aa).

The next 2 helical transmembrane spans lie at 12-32 and 80-100; these read IVLFLIINILPILILGLYLYA and IILINGIYIGNHGSFGIKIPL.

Its subcellular location is the cell membrane. This is an uncharacterized protein from Methanocaldococcus jannaschii (strain ATCC 43067 / DSM 2661 / JAL-1 / JCM 10045 / NBRC 100440) (Methanococcus jannaschii).